Consider the following 50-residue polypeptide: Defensin-like protein 1 (50 aa).

Cystine bridges form between C3–C50, C14–C35, C20–C44, and C24–C46.

The protein belongs to the DEFL family.

It localises to the secreted. Possesses antimicrobial activity sensitive to inorganic cations. Has no inhibitory effect on insect gut alpha-amylase. Induces potential changes in fungal membranes and increased K+ efflux and Ca(2+) uptake. Interacts with sphingolipids and ergosterols found in fungal plasma membranes. The chain is Defensin-like protein 1 from Dahlia merckii (Bedding dahlia).